Consider the following 340-residue polypeptide: Ferredoxin--NADP reductase (340 aa).

The FAD site is built by aspartate 33, glutamine 41, tyrosine 46, alanine 86, phenylalanine 120, aspartate 286, and threonine 327.

It belongs to the ferredoxin--NADP reductase type 2 family. In terms of assembly, homodimer. The cofactor is FAD.

It carries out the reaction 2 reduced [2Fe-2S]-[ferredoxin] + NADP(+) + H(+) = 2 oxidized [2Fe-2S]-[ferredoxin] + NADPH. This is Ferredoxin--NADP reductase from Rickettsia rickettsii (strain Sheila Smith).